A 614-amino-acid polypeptide reads, in one-letter code: DNA-directed DNA polymerase (614 aa).

It belongs to the DNA polymerase type-A family.

It catalyses the reaction DNA(n) + a 2'-deoxyribonucleoside 5'-triphosphate = DNA(n+1) + diphosphate. Its function is as follows. Replicates viral genomic DNA. This polymerase possesses two enzymatic activities: DNA synthesis (polymerase) and an exonucleolytic activity that degrades single-stranded DNA in the 3'-5' direction. The polypeptide is DNA-directed DNA polymerase (Escherichia coli (Escherichia coli phage phi32)).